We begin with the raw amino-acid sequence, 386 residues long: F420 non-reducing hydrogenase I small subunit (386 aa).

Residues 1–51 constitute a signal peptide (tat-type signal); sequence MVEMSTGTTNLVRTLDSMDFLKMDRRTFMKAVSALGATAFLGTYQTEIVNA. Residues C67, C70, C178, C227, H273, C276, C296, and C302 each contribute to the [4Fe-4S] cluster site. [3Fe-4S] cluster-binding residues include C311, C330, and C333.

Belongs to the [NiFe]/[NiFeSe] hydrogenase small subunit family. In terms of assembly, composed of a large subunit (VhoA), a small subunit (VhoG) and a cytochrome subunit (VhoC). The cofactor is [4Fe-4S] cluster. Requires [3Fe-4S] cluster as cofactor. Post-translationally, predicted to be exported by the Tat system. The position of the signal peptide cleavage has not been experimentally proven.

It is found in the cell membrane. It catalyses the reaction methanophenazine + H2 = dihydromethanophenazine. Part of the F420 non-reducing hydrogenase I complex that catalyzes the reduction of methanophenazine to dihydromethanophenazine. This is F420 non-reducing hydrogenase I small subunit from Methanosarcina mazei (strain ATCC BAA-159 / DSM 3647 / Goe1 / Go1 / JCM 11833 / OCM 88) (Methanosarcina frisia).